Here is a 48-residue protein sequence, read N- to C-terminus: ATP synthase protein 8 (48 aa).

Residues 13–32 (VVFTLISLSFIFFVFSKYIL) form a helical membrane-spanning segment.

Belongs to the ATPase protein 8 family. As to quaternary structure, F-type ATPases have 2 components, CF(1) - the catalytic core - and CF(0) - the membrane proton channel.

The protein localises to the mitochondrion membrane. Functionally, mitochondrial membrane ATP synthase (F(1)F(0) ATP synthase or Complex V) produces ATP from ADP in the presence of a proton gradient across the membrane which is generated by electron transport complexes of the respiratory chain. F-type ATPases consist of two structural domains, F(1) - containing the extramembraneous catalytic core and F(0) - containing the membrane proton channel, linked together by a central stalk and a peripheral stalk. During catalysis, ATP synthesis in the catalytic domain of F(1) is coupled via a rotary mechanism of the central stalk subunits to proton translocation. Part of the complex F(0) domain. Minor subunit located with subunit a in the membrane. The chain is ATP synthase protein 8 (ATP8) from Trichophyton rubrum (Athlete's foot fungus).